Reading from the N-terminus, the 226-residue chain is 7-cyano-7-deazaguanine synthase (226 aa).

8-18 is a binding site for ATP; it reads LSGGLDSTTTL. Residues Cys188, Cys198, Cys201, and Cys204 each coordinate Zn(2+).

Belongs to the QueC family. The cofactor is Zn(2+).

It carries out the reaction 7-carboxy-7-deazaguanine + NH4(+) + ATP = 7-cyano-7-deazaguanine + ADP + phosphate + H2O + H(+). The protein operates within purine metabolism; 7-cyano-7-deazaguanine biosynthesis. In terms of biological role, catalyzes the ATP-dependent conversion of 7-carboxy-7-deazaguanine (CDG) to 7-cyano-7-deazaguanine (preQ(0)). This is 7-cyano-7-deazaguanine synthase from Nitrosomonas eutropha (strain DSM 101675 / C91 / Nm57).